A 339-amino-acid polypeptide reads, in one-letter code: Heat-inducible transcription repressor HrcA (339 aa).

It belongs to the HrcA family.

In terms of biological role, negative regulator of class I heat shock genes (grpE-dnaK-dnaJ and groELS operons). Prevents heat-shock induction of these operons. The chain is Heat-inducible transcription repressor HrcA from Clostridium perfringens (strain 13 / Type A).